The following is a 396-amino-acid chain: Tryptophan synthase beta chain (396 aa).

Residue lysine 86 is modified to N6-(pyridoxal phosphate)lysine.

This sequence belongs to the TrpB family. As to quaternary structure, tetramer of two alpha and two beta chains. It depends on pyridoxal 5'-phosphate as a cofactor.

The enzyme catalyses (1S,2R)-1-C-(indol-3-yl)glycerol 3-phosphate + L-serine = D-glyceraldehyde 3-phosphate + L-tryptophan + H2O. It functions in the pathway amino-acid biosynthesis; L-tryptophan biosynthesis; L-tryptophan from chorismate: step 5/5. In terms of biological role, the beta subunit is responsible for the synthesis of L-tryptophan from indole and L-serine. This chain is Tryptophan synthase beta chain, found in Erwinia tasmaniensis (strain DSM 17950 / CFBP 7177 / CIP 109463 / NCPPB 4357 / Et1/99).